A 328-amino-acid chain; its full sequence is Phosphate acyltransferase (328 aa).

Belongs to the PlsX family. As to quaternary structure, homodimer. Probably interacts with PlsY.

The protein localises to the cytoplasm. It catalyses the reaction a fatty acyl-[ACP] + phosphate = an acyl phosphate + holo-[ACP]. The protein operates within lipid metabolism; phospholipid metabolism. Catalyzes the reversible formation of acyl-phosphate (acyl-PO(4)) from acyl-[acyl-carrier-protein] (acyl-ACP). This enzyme utilizes acyl-ACP as fatty acyl donor, but not acyl-CoA. The chain is Phosphate acyltransferase from Mycoplasma pneumoniae (strain ATCC 29342 / M129 / Subtype 1) (Mycoplasmoides pneumoniae).